The primary structure comprises 707 residues: MLNPIVRKFQYGQHTITLETGIMARQATAAVMASMDDTAVFVTVVGEKTTNSSQKFFPLTVNYQERTYAVGRIPGGFFRREGRPSENEILTARLIDRPIRPLFPKGFCNEIQIIATVVSVNPQINPDIISIIGASAALSLSGIPFYGPIGAARVGFVNNQYVLNPTIDDMKSSFLDLVVSGTQNAVLMVEAESKVLSEDKILGAIMFGHQQQQVVINNIRSLSNEASKLPWIISYPEINTELELKITKLAEKDISNAYLIFNKQERYEKLNFLKEEIIKLFFSENSNIDISEIEDIFEKIEKNIVRKRILNNENRIDGREKDMIRALDIRTGVLPRTHGSSLFTRGETQSLVSVTLGTSRDAQNLDELLGDKTDNFLFHYNFPPYSVGEIGIVGSPKRREIGHGRLAKRSLLAVMPKLDDFPYTIRIVSEITESNGSSSMASVCGASLALMDAGVPIKSAVAGISMGLVKEGDKYVLLSDILGDEDHLGDMDFKVSGTEEGITALQMDIKIEGITNEIMRIALNKAKSARLHILNVMKQALSKPRNEISEFAPRIHKIKINPEKIKDVIGKGGSVIRMLTEETGTIIEIEDDGTIKISATIGEKAKNAIRRIEEITAEIEVGRIYSGKVTRIVDFGAFISIGIGKEGLVHISQISNKRVEKVSDHLTVDQIISVKVLEIDRQGRLRLSIKEVENSIISNKSINNIYI.

The Mg(2+) site is built by Asp-486 and Asp-492. One can recognise a KH domain in the interval 553–612 (PRIHKIKINPEKIKDVIGKGGSVIRMLTEETGTIIEIEDDGTIKISATIGEKAKNAIRRI). The S1 motif domain occupies 622-690 (GRIYSGKVTR…RQGRLRLSIK (69 aa)).

The protein belongs to the polyribonucleotide nucleotidyltransferase family. In terms of assembly, component of the RNA degradosome, which is a multiprotein complex involved in RNA processing and mRNA degradation. Mg(2+) is required as a cofactor.

The protein resides in the cytoplasm. The catalysed reaction is RNA(n+1) + phosphate = RNA(n) + a ribonucleoside 5'-diphosphate. Its function is as follows. Involved in mRNA degradation. Catalyzes the phosphorolysis of single-stranded polyribonucleotides processively in the 3'- to 5'-direction. The polypeptide is Polyribonucleotide nucleotidyltransferase (Buchnera aphidicola subsp. Schizaphis graminum (strain Sg)).